A 230-amino-acid polypeptide reads, in one-letter code: PKHD-type hydroxylase XF_0598 (230 aa).

Residues 78–182 (RTLPPRFNCY…RIASFFWVQS (105 aa)) enclose the Fe2OG dioxygenase domain. Fe cation contacts are provided by histidine 96, aspartate 98, and histidine 163. Residue arginine 173 coordinates 2-oxoglutarate.

Fe(2+) serves as cofactor. The cofactor is L-ascorbate.

This chain is PKHD-type hydroxylase XF_0598, found in Xylella fastidiosa (strain 9a5c).